The following is a 547-amino-acid chain: Chaperonin GroEL (547 aa).

ATP is bound by residues 30-33, lysine 51, 87-91, glycine 415, and aspartate 496; these read TLGP and DGTTT.

The protein belongs to the chaperonin (HSP60) family. As to quaternary structure, forms a cylinder of 14 subunits composed of two heptameric rings stacked back-to-back. Interacts with the co-chaperonin GroES.

It is found in the cytoplasm. It carries out the reaction ATP + H2O + a folded polypeptide = ADP + phosphate + an unfolded polypeptide.. In terms of biological role, together with its co-chaperonin GroES, plays an essential role in assisting protein folding. The GroEL-GroES system forms a nano-cage that allows encapsulation of the non-native substrate proteins and provides a physical environment optimized to promote and accelerate protein folding. This Actinobacillus succinogenes (strain ATCC 55618 / DSM 22257 / CCUG 43843 / 130Z) protein is Chaperonin GroEL.